Reading from the N-terminus, the 489-residue chain is Bridging integrator 2 (489 aa).

The BAR domain maps to 28 to 244 (VLQKLGKTVE…MSKLEKQHSN (217 aa)). The segment covering 267–302 (QSCAASSPVSPVSPVSPVTSPTSPSATSEPESVSAT) has biased composition (low complexity). Positions 267-489 (QSCAASSPVS…ASGGLVGLFL (223 aa)) are disordered. Position 273 is a phosphoserine (S273). Over residues 311–331 (GGEDSCESQESLKDEEADEAQ) the composition is skewed to acidic residues. A Phosphoserine modification is found at S357. The span at 358-368 (QEEALSSSAQS) shows a compositional bias: low complexity. Phosphoserine occurs at positions 380, 392, 420, 422, 424, 430, 435, 439, and 443.

In terms of assembly, homodimer. Interacts with BIN1. Interacts with ARHGEF6 (via SH3 domain), ARHGEF7 (via SH3 domain), SH3GL1, SH3GL2 and SH3GL3. Identified in a complex with ARHGEF6 and GIT2.

Its subcellular location is the cytoplasm. The protein resides in the cell projection. The protein localises to the podosome membrane. It is found in the cell cortex. It localises to the phagocytic cup. Its function is as follows. Promotes cell motility and migration, probably via its interaction with the cell membrane and with podosome proteins that mediate interaction with the cytoskeleton. Modulates membrane curvature and mediates membrane tubulation. Inhibits phagocytosis. Plays a role in podosome formation. This is Bridging integrator 2 (Bin2) from Mus musculus (Mouse).